Consider the following 245-residue polypeptide: Probable transcriptional regulatory protein LVIS_1199 (245 aa).

The disordered stretch occupies residues 1 to 23 (MSGHSKWHNIQGRKNAQDAKRGK).

The protein belongs to the TACO1 family.

The protein localises to the cytoplasm. The chain is Probable transcriptional regulatory protein LVIS_1199 from Levilactobacillus brevis (strain ATCC 367 / BCRC 12310 / CIP 105137 / JCM 1170 / LMG 11437 / NCIMB 947 / NCTC 947) (Lactobacillus brevis).